The following is a 375-amino-acid chain: Acyl-coenzyme A diphosphatase NUDT19 (375 aa).

One can recognise a Nudix hydrolase domain in the interval 15-263 (AASIVLAAGW…IWLPPPQFYE (249 aa)). Residues 91-116 (LGPAPFSRTAFPSLPDTDDHKTDNTG) form a disordered region. Positions 116–137 (GTLPEDVAFRICAVREAFEEAG) match the Nudix box motif. Residues Glu131 and Glu135 each coordinate Mg(2+). A Microbody targeting signal motif is present at residues 373–375 (SHL).

It belongs to the Nudix hydrolase family. As to quaternary structure, monomer. Requires Mg(2+) as cofactor. Mn(2+) is required as a cofactor.

The protein localises to the peroxisome. The catalysed reaction is an acyl-CoA + H2O = an acyl-4'-phosphopantetheine + adenosine 3',5'-bisphosphate + 2 H(+). It catalyses the reaction CoA + H2O = (R)-4'-phosphopantetheine + adenosine 3',5'-bisphosphate + 2 H(+). It carries out the reaction hexanoyl-CoA + H2O = hexanoyl-4'-phosphopantetheine + adenosine 3',5'-bisphosphate + 2 H(+). The enzyme catalyses octanoyl-CoA + H2O = S-octanoyl-4'-phosphopantetheine + adenosine 3',5'-bisphosphate + 2 H(+). The catalysed reaction is butanoyl-CoA + H2O = S-butanoyl-4'-phosphopantetheine + adenosine 3',5'-bisphosphate + 2 H(+). It catalyses the reaction propanoyl-CoA + H2O = propanoyl-4'-phosphopantetheine + adenosine 3',5'-bisphosphate + 2 H(+). It carries out the reaction malonyl-CoA + H2O = malonyl-4'-phosphopantetheine + adenosine 3',5'-bisphosphate + 2 H(+). The enzyme catalyses succinyl-CoA + H2O = succinyl-4'-phosphopantetheine + adenosine 3',5'-bisphosphate + 2 H(+). The catalysed reaction is choloyl-CoA + H2O = S-choloyl-4'-phosphopantetheine + adenosine 3',5'-bisphosphate + 2 H(+). It catalyses the reaction 4,8-dimethylnonanoyl-CoA + H2O = S-(4,8-dimethylnonanoyl)-4'-phosphopantetheine + adenosine 3',5'-bisphosphate + 2 H(+). It carries out the reaction (9Z,12Z,15Z)-octadecatrienoyl-CoA + H2O = S-(9Z,12Z,15Z-octadecatrienoyl)-4'-phosphopantetheine + adenosine 3',5'-bisphosphate + 2 H(+). The enzyme catalyses (9Z,12Z)-octadecadienoyl-CoA + H2O = S-(9Z,12Z-octadecadienoyl)-4'-phosphopantetheine + adenosine 3',5'-bisphosphate + 2 H(+). The catalysed reaction is (9Z)-hexadecenoyl-CoA + H2O = S-(9Z-hexadecenoyl)-4'-phosphopantetheine + adenosine 3',5'-bisphosphate + 2 H(+). It catalyses the reaction (9Z)-tetradecenoyl-CoA + H2O = S-(9Z-tetradecenoyl)-4'-phosphopantetheine + adenosine 3',5'-bisphosphate + 2 H(+). It carries out the reaction (6Z)-octenoyl-CoA + H2O = S-(6Z-octenoyl)-4'-phosphopantetheine + adenosine 3',5'-bisphosphate + 2 H(+). The enzyme catalyses hexadecanoyl-CoA + H2O = S-hexadecanoyl-4'-phosphopantetheine + adenosine 3',5'-bisphosphate + 2 H(+). The catalysed reaction is tetradecanoyl-CoA + H2O = tetradecanoyl-4'-phosphopantetheine + adenosine 3',5'-bisphosphate + 2 H(+). It catalyses the reaction dodecanoyl-CoA + H2O = S-dodecanoyl-4'-phosphopantetheine + adenosine 3',5'-bisphosphate + 2 H(+). It carries out the reaction a 5'-end CoA-ribonucleoside in mRNA + H2O = a 5'-end phospho-adenosine-phospho-ribonucleoside in mRNA + (R)-4'-phosphopantetheine + 2 H(+). Fatty acyl-coenzyme A (CoA) diphosphatase that hydrolyzes fatty acyl-CoA to yield acyl-4'-phosphopantetheine and adenosine 3',5'-bisphosphate. Mediates the hydrolysis of a wide range of CoA esters, including choloyl-CoA and branched-chain fatty-acyl-CoA esters and at low substrate concentrations medium and long-chain fatty-acyl-CoA esters are the primary substrates. Highest activity seen with medium-chain acyl-CoA esters and higher rates of activity seen with the unsaturated acyl-CoA esters compared with the saturated esters. Exhibits decapping activity towards dpCoA-capped RNAs in vitro. The protein is Acyl-coenzyme A diphosphatase NUDT19 (NUDT19) of Homo sapiens (Human).